Reading from the N-terminus, the 159-residue chain is MPSFDVVSELDKHELTNAVDNAIKELDRRFDLRGKCSIESKDKTLTLTAEAEFMLEQMLDIVRSSLIKRKIDCQCMEAKDPYASGKVMKQEVTFREGIDKELAKKIVAHIKDAKLKVQAAIQGEQVRVTGKKRDDLQEAIALLRGHEFGMPLQYNNFRD.

The protein belongs to the YajQ family.

Nucleotide-binding protein. This is Nucleotide-binding protein Pmen_0939 from Ectopseudomonas mendocina (strain ymp) (Pseudomonas mendocina).